The sequence spans 500 residues: Toluene-4-monooxygenase system, hydroxylase component subunit alpha (500 aa).

Fe cation is bound by residues Glu-104, Glu-134, His-137, Glu-197, Glu-231, and His-234.

Belongs to the TmoA/XamoA family. The alkene monooxygenase multicomponent enzyme system is composed of an electron transfer component and a monooxygenase component interacting with the effector protein TmoD. The electron transfer component is composed of a ferredoxin reductase (TmoF) and a ferredoxin (TmoC), and the monooxygenase component is formed by a heterohexamer (dimer of heterotrimers) of two alpha subunits (TmoA), two beta subunits (TmoE) and two gamma subunits (TmoB). Requires Fe(2+) as cofactor.

It catalyses the reaction toluene + NADH + O2 + H(+) = 4-methylphenol + NAD(+) + H2O. It participates in xenobiotic degradation; toluene degradation. Inhibited by Zn(2+) and Cu(2+). In terms of biological role, component of the toluene-4-monooxygenase multicomponent enzyme system which catalyzes the O2- and NADH-dependent hydroxylation of toluene to form p-cresol. Also able to convert benzene to phenol, catechol, and 1,2,3-trihydroxybenzene by successive hydroxylations. This Ectopseudomonas mendocina (Pseudomonas mendocina) protein is Toluene-4-monooxygenase system, hydroxylase component subunit alpha.